A 3094-amino-acid polypeptide reads, in one-letter code: Replicase polyprotein 1ab (3094 aa).

Residues Cys-509 and His-569 each act as for leader protease activity in the active site. Positions 622–647 (ARSVEKDLIDFKDEIKSLSKEKRSVT) form a coiled coil. The Alphavirus-like MT domain occupies 670–857 (SFTHSVYSDH…HKLSNIKSIM (188 aa)). Over residues 1807 to 1816 (DSESVSSDEV) the composition is skewed to low complexity. The disordered stretch occupies residues 1807-1828 (DSESVSSDEVASNPRPGLHGGS). The region spanning 2215 to 2387 (TQTNFVSANA…FVDDESRVYG (173 aa)) is the (+)RNA virus helicase ATP-binding domain. The (+)RNA virus helicase C-terminal domain occupies 2388–2548 (EVSYRCPWDV…AYRVYPTSFG (161 aa)). Residues 2817–2930 (YNVGEIDFSK…FSESPIRNSA (114 aa)) enclose the RdRp catalytic domain.

The leader protease is released by autoproteolysis.

The protein resides in the host cytoplasmic vesicle membrane. It catalyses the reaction RNA(n) + a ribonucleoside 5'-triphosphate = RNA(n+1) + diphosphate. The catalysed reaction is ATP + H2O = ADP + phosphate + H(+). In terms of biological role, L-pro is involved in systemic transport and in RNA amplification. RNA-dependent RNA polymerase replicates the viral genome. The protein is Replicase polyprotein 1ab of Beet yellows virus (isolate Ukraine) (BYV).